The sequence spans 304 residues: tRNA pseudouridine synthase B (304 aa).

D48 (nucleophile) is an active-site residue.

Belongs to the pseudouridine synthase TruB family. Type 1 subfamily.

The enzyme catalyses uridine(55) in tRNA = pseudouridine(55) in tRNA. Its function is as follows. Responsible for synthesis of pseudouridine from uracil-55 in the psi GC loop of transfer RNAs. This chain is tRNA pseudouridine synthase B, found in Pseudomonas aeruginosa (strain UCBPP-PA14).